We begin with the raw amino-acid sequence, 486 residues long: MVQLNQNFIDTITQELPAHLSMDEFIAACDKPLRRSIRVNTLKISSDDFKTLMQPKGWTFDPIPWCEDGFWISYDEEEQLGNALEHIQGLFYIQEASSMLPPTALFTPSAFTTSAKWQCVLDLASAPGSKTTQMAALMQNQGLLVANEYSASRVKVLHANVLRMGASHCALTHFDGRVFGEYLYESFDAVLIDAPCGGEGTVRKDADALKHWSLDDVLAISETQKALIESAFLALKPGGSLVYSTCTLNRLENQGVCEYLKQVYGDAVQFESLSDLFDGADRATTAEGFLHVWPQIYDSEGFFVAKLTKTASVPRLLPEPKLQKNFPFTTASAKQAQGIKDYFQQDLGISLPDELIMVRDDEFWLFPHEFNAFIGRMRFQRIGIKLADNSKHGFKVRHEAIIALAGKQLSPTAKTVDVSDVEAKEYLMGRDIPLATAGKAQGEVIVCYGGAPLGMAKHLGNKLKNNLPRDLVKDKVLLLPEQTKSL.

Residues 124-130 (ASAPGSK), glutamate 148, aspartate 175, and aspartate 193 contribute to the S-adenosyl-L-methionine site. Catalysis depends on cysteine 246, which acts as the Nucleophile.

It belongs to the class I-like SAM-binding methyltransferase superfamily. RsmB/NOP family.

It localises to the cytoplasm. It carries out the reaction cytidine(1407) in 16S rRNA + S-adenosyl-L-methionine = 5-methylcytidine(1407) in 16S rRNA + S-adenosyl-L-homocysteine + H(+). Its function is as follows. Specifically methylates the cytosine at position 1407 (m5C1407) of 16S rRNA. This chain is Ribosomal RNA small subunit methyltransferase F, found in Shewanella baltica (strain OS155 / ATCC BAA-1091).